The primary structure comprises 543 residues: CTP synthase (543 aa).

Residues 1–267 (MKQTKYIFVT…LSPIAEILDL (267 aa)) are amidoligase domain. Ser15 contributes to the CTP binding site. UTP is bound at residue Ser15. Residues 16 to 21 (SLGKGI) and Asp73 contribute to the ATP site. Residues Asp73 and Glu141 each contribute to the Mg(2+) site. CTP contacts are provided by residues 148-150 (DIE), 188-193 (KTKPTQ), and Lys224. UTP is bound by residues 188 to 193 (KTKPTQ) and Lys224. The 252-residue stretch at 292–543 (KIAFVGKYVD…IKAAINYEDN (252 aa)) folds into the Glutamine amidotransferase type-1 domain. Residue Gly354 participates in L-glutamine binding. Cys381 (nucleophile; for glutamine hydrolysis) is an active-site residue. Residues 382–385 (LGMQ), Glu405, and Arg473 each bind L-glutamine. Catalysis depends on residues His516 and Glu518.

This sequence belongs to the CTP synthase family. In terms of assembly, homotetramer.

It carries out the reaction UTP + L-glutamine + ATP + H2O = CTP + L-glutamate + ADP + phosphate + 2 H(+). The enzyme catalyses L-glutamine + H2O = L-glutamate + NH4(+). It catalyses the reaction UTP + NH4(+) + ATP = CTP + ADP + phosphate + 2 H(+). It functions in the pathway pyrimidine metabolism; CTP biosynthesis via de novo pathway; CTP from UDP: step 2/2. Its activity is regulated as follows. Allosterically activated by GTP, when glutamine is the substrate; GTP has no effect on the reaction when ammonia is the substrate. The allosteric effector GTP functions by stabilizing the protein conformation that binds the tetrahedral intermediate(s) formed during glutamine hydrolysis. Inhibited by the product CTP, via allosteric rather than competitive inhibition. Functionally, catalyzes the ATP-dependent amination of UTP to CTP with either L-glutamine or ammonia as the source of nitrogen. Regulates intracellular CTP levels through interactions with the four ribonucleotide triphosphates. The protein is CTP synthase of Campylobacter jejuni subsp. jejuni serotype O:2 (strain ATCC 700819 / NCTC 11168).